A 419-amino-acid chain; its full sequence is Erythromycin esterase type II (419 aa).

Functionally, this enzyme confers resistance to erythromycin through inactivation by hydrolyzing the lactone ring of the antibiotic. In Escherichia coli, this protein is Erythromycin esterase type II (ereB).